The following is a 634-amino-acid chain: Microtubule-associated protein 70-2 (634 aa).

The interval 1–57 (MSDVSGDGDLSATVTEHEVTPQPPVSSATYPSLTVSASYKESSGGKSSSKRRPIRPS) is disordered. Positions 25-35 (VSSATYPSLTV) are enriched in polar residues. Over residues 36–47 (SASYKESSGGKS) the composition is skewed to low complexity. Residues 74–392 (DPVKVELNRL…LRLKVLEETL (319 aa)) are a coiled coil. Residues 258-494 (ILDRMHRQKV…YSFNKATDDS (237 aa)) are required for targeting to microtubules. Composition is skewed to polar residues over residues 393-417 (RGTSSSATRNTPEARSMSNGPSRRQ) and 443-464 (MRHSLSINSTSVLKNAKGTSKS). Disordered stretches follow at residues 393–526 (RGTS…SVPG) and 594–634 (VEKD…KSTQ). The stretch at 532 to 601 (LQKEVVSLRK…MRVEKDQDAR (70 aa)) forms a coiled coil. Positions 605–616 (FSNSKSPSNTAQ) are enriched in polar residues.

This sequence belongs to the MAP70 family.

It localises to the cytoplasm. The protein resides in the cytoskeleton. Plant-specific protein that interact with microtubules. The sequence is that of Microtubule-associated protein 70-2 (MAP70.2) from Arabidopsis thaliana (Mouse-ear cress).